The primary structure comprises 209 residues: Rac-like GTP-binding protein ARAC7 (209 aa).

Residue 13-20 (GDGAVGKT) participates in GTP binding. The short motif at 35 to 43 (YIPTVFDNF) is the Effector region element. GTP contacts are provided by residues 60–64 (DTAGQ) and 118–121 (TKLD). Residues C196, C203, and C206 are each lipidated (S-palmitoyl cysteine).

This sequence belongs to the small GTPase superfamily. Rho family. In terms of processing, although this sequence has a C-terminal -CXXX, it is palmitoylated at Cys-206, rather than prenylated.

It is found in the membrane. Functionally, acts as a negative regulator of abscisic acid (ABA) responses. The sequence is that of Rac-like GTP-binding protein ARAC7 (ARAC7) from Arabidopsis thaliana (Mouse-ear cress).